The chain runs to 146 residues: Phage-like element PBSX protein XkdJ (146 aa).

The protein to B.subtilis YqbJ.

This chain is Phage-like element PBSX protein XkdJ (xkdJ), found in Bacillus subtilis (strain 168).